The sequence spans 317 residues: Putative 2-hydroxyacid dehydrogenase SAR2389 (317 aa).

NAD(+)-binding positions include 155–156 (EI), 234–236 (ASR), and Asp260. Arg236 is an active-site residue. Glu265 is an active-site residue. His283 acts as the Proton donor in catalysis. 283 to 286 (HIGN) is an NAD(+) binding site.

The protein belongs to the D-isomer specific 2-hydroxyacid dehydrogenase family.

In Staphylococcus aureus (strain MRSA252), this protein is Putative 2-hydroxyacid dehydrogenase SAR2389.